A 158-amino-acid chain; its full sequence is Endoribonuclease YbeY (158 aa).

Residues His124, His128, and His134 each contribute to the Zn(2+) site.

This sequence belongs to the endoribonuclease YbeY family. The cofactor is Zn(2+).

It localises to the cytoplasm. Its function is as follows. Single strand-specific metallo-endoribonuclease involved in late-stage 70S ribosome quality control and in maturation of the 3' terminus of the 16S rRNA. In Caldicellulosiruptor bescii (strain ATCC BAA-1888 / DSM 6725 / KCTC 15123 / Z-1320) (Anaerocellum thermophilum), this protein is Endoribonuclease YbeY.